Here is a 234-residue protein sequence, read N- to C-terminus: Glucosamine-6-phosphate deaminase (234 aa).

The active-site Proton acceptor; for enolization step is aspartate 63. Asparagine 129 functions as the For ring-opening step in the catalytic mechanism. Histidine 131 (proton acceptor; for ring-opening step) is an active-site residue. Glutamate 136 acts as the For ring-opening step in catalysis.

It belongs to the glucosamine/galactosamine-6-phosphate isomerase family. NagB subfamily.

It carries out the reaction alpha-D-glucosamine 6-phosphate + H2O = beta-D-fructose 6-phosphate + NH4(+). It participates in amino-sugar metabolism; N-acetylneuraminate degradation; D-fructose 6-phosphate from N-acetylneuraminate: step 5/5. Its function is as follows. Catalyzes the reversible isomerization-deamination of glucosamine 6-phosphate (GlcN6P) to form fructose 6-phosphate (Fru6P) and ammonium ion. The sequence is that of Glucosamine-6-phosphate deaminase from Listeria monocytogenes serotype 4a (strain HCC23).